An 80-amino-acid polypeptide reads, in one-letter code: Protein FAM229B (80 aa).

Residues 1 to 44 are disordered; sequence MPFRFGTQPRRFPVEGGDSSIGLEPGLSSSATCNGKEMSPTRQL.

It belongs to the FAM229 family.

The polypeptide is Protein FAM229B (FAM229B) (Bos taurus (Bovine)).